The primary structure comprises 301 residues: uncharacterized protein (301 aa).

Residues 1–5 lie on the Extracellular side of the membrane; it reads MSYKK. The helical transmembrane segment at 6–26 threads the bilayer; sequence FVYFINLFFLLGATLLTFFLI. The Cytoplasmic segment spans residues 27–112; sequence LAGGRTTGVL…NRNAYYYLSR (86 aa). Residues 113-133 traverse the membrane as a helical segment; sequence VGWAMLLIGLFFLLITLVSVI. The Extracellular segment spans residues 134–143; sequence ASLIRYNRRT. A helical transmembrane segment spans residues 144–164; it reads AALATAMSWITLFFITLSACL. Over 165-191 the chain is Cytoplasmic; that stretch reads YTGCYAKAVKAFHHENRDARLGPKNFG. Residues 192-212 traverse the membrane as a helical segment; sequence LIWTTVFLLIVNAICCTIMVA. The Extracellular portion of the chain corresponds to 213–301; the sequence is THKRNEYIYD…YTEQNVPVVS (89 aa). The tract at residues 254-301 is disordered; it reads VQQSQSHQNHRFFKKLRTKKRTVTSAGDEPDRVQEERVYTEQNVPVVS. Over residues 261 to 275 the composition is skewed to basic residues; the sequence is QNHRFFKKLRTKKRT. The span at 282–292 shows a compositional bias: basic and acidic residues; that stretch reads EPDRVQEERVY.

Belongs to the SUR7 family.

The protein localises to the cell membrane. Involved in sporulation and affects the sphingolipid composition of the plasma membrane. This is an uncharacterized protein from Saccharomyces cerevisiae (strain ATCC 204508 / S288c) (Baker's yeast).